A 156-amino-acid polypeptide reads, in one-letter code: uncharacterized protein (156 aa).

A compositionally biased stretch (pro residues) spans Met1–Ala12. Disordered regions lie at residues Met1–Ala89 and Pro129–Asp156. Over residues Ala49–Thr67 the composition is skewed to basic and acidic residues.

This is an uncharacterized protein from Homo sapiens (Human).